The primary structure comprises 314 residues: GDP-L-fucose synthase (314 aa).

Residues 15–21 (GHKGMVG) and 109–112 (LGSS) contribute to the NADP(+) site. The active-site Proton donor/acceptor is the Tyr-140. NADP(+) contacts are provided by residues Lys-144, 167–170 (PTNL), and His-183. Substrate is bound by residues Lys-191, Trp-206, Arg-213, and Asp-273.

Belongs to the NAD(P)-dependent epimerase/dehydratase family. Fucose synthase subfamily.

The enzyme catalyses GDP-beta-L-fucose + NADP(+) = GDP-4-dehydro-alpha-D-rhamnose + NADPH + H(+). It functions in the pathway nucleotide-sugar biosynthesis; GDP-L-fucose biosynthesis via de novo pathway; GDP-L-fucose from GDP-alpha-D-mannose: step 2/2. Catalyzes the two-step NADP-dependent conversion of GDP-4-dehydro-6-deoxy-D-mannose to GDP-fucose, involving an epimerase and a reductase reaction. The chain is GDP-L-fucose synthase from Sinorhizobium fredii (strain NBRC 101917 / NGR234).